The primary structure comprises 154 residues: MAFKEKVKELLEQGLAEYPNLFLIDLNINDSNKIIITLDGDNGVQLQDCINISRSIDNNLDREEVDFALEVASAGVSLPLKLVRQYKKNIGRTLKIKTATQTIEALLLEVSDQDITVEWSSREPKKIGKGKETVVHNEKIAYAAIQEAIVIIIF.

It belongs to the RimP family.

Its subcellular location is the cytoplasm. Required for maturation of 30S ribosomal subunits. This chain is Ribosome maturation factor RimP, found in Flavobacterium psychrophilum (strain ATCC 49511 / DSM 21280 / CIP 103535 / JIP02/86).